The sequence spans 993 residues: UPF0182 protein MAP_3291c (993 aa).

Helical transmembrane passes span 18 to 38 (ILIL…RLID), 63 to 83 (FVVF…GLAV), 113 to 133 (LVSV…AQSY), 175 to 195 (FVAV…FGGI), 210 to 230 (IQLV…YWLD), 254 to 274 (AVLP…AAVF), and 287 to 307 (IGLV…PLIV). The disordered stretch occupies residues 903–941 (NIQPTEGGAPAASPPANAPAPAVTPGSAPPVAAPPVPDG). The span at 929 to 939 (SAPPVAAPPVP) shows a compositional bias: pro residues.

It belongs to the UPF0182 family.

It localises to the cell membrane. This chain is UPF0182 protein MAP_3291c, found in Mycolicibacterium paratuberculosis (strain ATCC BAA-968 / K-10) (Mycobacterium paratuberculosis).